Reading from the N-terminus, the 430-residue chain is Tol-Pal system protein TolB (430 aa).

The first 26 residues, 1–26, serve as a signal peptide directing secretion; it reads MSLMTKLGLRTLVASCLIAVGGAAHA.

The protein belongs to the TolB family. The Tol-Pal system is composed of five core proteins: the inner membrane proteins TolA, TolQ and TolR, the periplasmic protein TolB and the outer membrane protein Pal. They form a network linking the inner and outer membranes and the peptidoglycan layer.

The protein resides in the periplasm. In terms of biological role, part of the Tol-Pal system, which plays a role in outer membrane invagination during cell division and is important for maintaining outer membrane integrity. This chain is Tol-Pal system protein TolB, found in Paraburkholderia phytofirmans (strain DSM 17436 / LMG 22146 / PsJN) (Burkholderia phytofirmans).